We begin with the raw amino-acid sequence, 164 residues long: Protein-export protein SecB (164 aa).

Belongs to the SecB family. In terms of assembly, homotetramer, a dimer of dimers. One homotetramer interacts with 1 SecA dimer.

The protein resides in the cytoplasm. One of the proteins required for the normal export of preproteins out of the cell cytoplasm. It is a molecular chaperone that binds to a subset of precursor proteins, maintaining them in a translocation-competent state. It also specifically binds to its receptor SecA. The protein is Protein-export protein SecB of Rhodopseudomonas palustris (strain BisB18).